We begin with the raw amino-acid sequence, 478 residues long: MAKDKKFVEDITPMDEDFAQWYTDIVKKAELADYSSIKGCMIIRPNGYAIWENIQKYVDTKLKEYGHENVSMPIFIPENLLQKEKDHVEGFAPEVAWVTHGGDDELAERLCVRPTSETLFCEHYAKIVQSYKDLPKLYNQWCSVVRWEKTTRPFLRTTEFLWQEGHTIHETKEEAESHSLKILNMYSRLCEDMLAMPVVMGKKTEKEKFAGADDTYTIESLMHDGKALQAGTSHYLGQNFSKAFAIQFSDRNGKLEYPHYTTWAVTTRLIGAIIMVHGDDSGLKLPPRIAPTQAVIIPVAQHKEGVLEKAKELKERLAKVVRVKLDDSDKMPGWKYSEYEMKGIPLRIEIGPKDIEKNQAVLVRRDNREKTIVSLDEIEVKVQEMLDIIHNSMLEEARKSRDEKTYVAITMEEFEDIIENKPGFIKAMWCGDRACEDKIREVTGATSRCMPFEQEVVSDTCVCCGKKAKNLVYWGRAY.

It belongs to the class-II aminoacyl-tRNA synthetase family. ProS type 3 subfamily. As to quaternary structure, homodimer.

The protein localises to the cytoplasm. The enzyme catalyses tRNA(Pro) + L-proline + ATP = L-prolyl-tRNA(Pro) + AMP + diphosphate. In terms of biological role, catalyzes the attachment of proline to tRNA(Pro) in a two-step reaction: proline is first activated by ATP to form Pro-AMP and then transferred to the acceptor end of tRNA(Pro). The sequence is that of Proline--tRNA ligase from Clostridium botulinum (strain 657 / Type Ba4).